The primary structure comprises 345 residues: Anthranilate phosphoribosyltransferase (345 aa).

Residues Gly-88, Gly-91–Asp-92, Thr-96, Asn-98–Thr-101, Lys-116–Gly-124, and Ser-128 each bind 5-phospho-alpha-D-ribose 1-diphosphate. Gly-88 lines the anthranilate pocket. Ser-100 provides a ligand contact to Mg(2+). Asn-119 contributes to the anthranilate binding site. Arg-174 is an anthranilate binding site. Mg(2+) is bound by residues Asp-233 and Glu-234.

It belongs to the anthranilate phosphoribosyltransferase family. Homodimer. Mg(2+) serves as cofactor.

The enzyme catalyses N-(5-phospho-beta-D-ribosyl)anthranilate + diphosphate = 5-phospho-alpha-D-ribose 1-diphosphate + anthranilate. Its pathway is amino-acid biosynthesis; L-tryptophan biosynthesis; L-tryptophan from chorismate: step 2/5. Its function is as follows. Catalyzes the transfer of the phosphoribosyl group of 5-phosphorylribose-1-pyrophosphate (PRPP) to anthranilate to yield N-(5'-phosphoribosyl)-anthranilate (PRA). The protein is Anthranilate phosphoribosyltransferase of Prochlorococcus marinus (strain NATL2A).